A 1116-amino-acid polypeptide reads, in one-letter code: Phosphatidylinositol 4-kinase beta 2 (1116 aa).

The PIK helical domain occupies 1–143 (MQMAQFLSLV…SRIQEKCQIA (143 aa)). Repeat copies occupy residues 210 to 229 (ADDNKIFKRLIPSPKVRDAL), 242 to 261 (CEKDGFFKRLLRDSRGEDDE), 264 to 283 (SNSEGFFKRLLKDNKSEEEE), 286 to 304 (NNSEGFFKRLRSSKGDEEE), 307 to 326 (SSSDGFFKRLLRDNKGDEEE), 329 to 348 (ANSEGFFKKLLRDSKNEDEE), 351 to 370 (ANTEGFFKKLFHESKNEDDK), and 378 to 396 (EEKDGFLKKLFKEKFDEKR). Positions 210–507 (ADDNKIFKRL…FRDRDRSVED (298 aa)) are 11 X 20 AA approximate repeats (PPC). Basic and acidic residues predominate over residues 394–404 (EKRNGNERNET). Residues 394–417 (EKRNGNERNETDETVYTDETSGED) are disordered. Residues 405-415 (DETVYTDETSG) show a composition bias toward acidic residues. Residues 418–436 (NGREGFFKKLFKEKFEDKP) form repeat 9. A phosphoserine mark is found at serine 447 and serine 452. 2 tandem repeats follow at residues 452–470 (SSEFSLFRRLFRRHPEDVK) and 488–507 (PGTENFFRKLFRDRDRSVED). Disordered stretches follow at residues 515–540 (KYKEKCPGSPKPQNNTPSKKPPLPNN) and 794–813 (GEAPPGLPLKGAGQDSSDAQ). A PI3K/PI4K catalytic domain is found at 830-1101 (EFWEGKRLRI…LISSSLDAWR (272 aa)). The interval 836-842 (RLRIRKD) is G-loop. The segment at 964–972 (QIKDRHNGN) is catalytic loop. An activation loop region spans residues 983–1007 (HIDFGFMLSNSPGGVNFESAPFKLT).

This sequence belongs to the PI3/PI4-kinase family. Type III PI4K subfamily.

It is found in the cell membrane. It localises to the golgi apparatus. The protein localises to the trans-Golgi network. Its subcellular location is the cytoplasmic vesicle membrane. The catalysed reaction is a 1,2-diacyl-sn-glycero-3-phospho-(1D-myo-inositol) + ATP = a 1,2-diacyl-sn-glycero-3-phospho-(1D-myo-inositol 4-phosphate) + ADP + H(+). In terms of biological role, acts on phosphatidylinositol (PtdIns) in the first committed step in the production of the second messenger inositol-1,4,5-trisphosphate. Necessary for proper organization of the trans-Golgi network (TGN) and post-Golgi secretion in root hairs. Together with PI4KB1, required during polarized root hair expansion and pollen tube elongation. Functions redundantly with PI4KB1 upstream of the cold response phosphoinositide-dependent phospholipase C (PI-PLC) pathway. This is Phosphatidylinositol 4-kinase beta 2 (PI4KB2) from Arabidopsis thaliana (Mouse-ear cress).